A 92-amino-acid chain; its full sequence is Large ribosomal subunit protein eL43z (92 aa).

The C4-type zinc-finger motif lies at 39–60; the sequence is CEFCGKFAVKRKAVGIWGCKDC.

Belongs to the eukaryotic ribosomal protein eL43 family.

The chain is Large ribosomal subunit protein eL43z from Oryza sativa subsp. japonica (Rice).